The chain runs to 694 residues: Scarecrow-like protein 33 (694 aa).

The tract at residues 289 to 313 (PAKASTFSKSPKGEKPEASGNSYTK) is disordered. One can recognise a GRAS domain in the interval 309–692 (NSYTKETPDL…RIVYGSSIWV (384 aa)). The segment at 316 to 376 (PDLRTMLVSC…EARLAGIGTQ (61 aa)) is leucine repeat I (LRI). A VHIID region spans residues 395 to 462 (YQTYISVCPF…GSSCKLRITG (68 aa)). Positions 428–432 (IHIID) match the VHIID motif. A leucine repeat II (LRII) region spans residues 478–510 (ETGRRLAKYCQKFNIPFEYNAIAQKWESIKLED). The interval 519-613 (VAVNSLFRFR…KEFYGREIMN (95 aa)) is PFYRE. The SAW stretch occupies residues 616–692 (ACEGTERVER…RIVYGSSIWV (77 aa)).

The protein belongs to the GRAS family. As to quaternary structure, interacts with SNRNP35.

The protein resides in the nucleus. In terms of biological role, probable transcription factor involved in plant development. This is Scarecrow-like protein 33 (SCL33) from Arabidopsis thaliana (Mouse-ear cress).